We begin with the raw amino-acid sequence, 803 residues long: Volume-regulated anion channel subunit LRRC8C (803 aa).

Over 1 to 22 the chain is Cytoplasmic; the sequence is MIPVTEFRQFSEQQPAFRVLKP. A helical transmembrane segment spans residues 23–48; the sequence is WWDVFTDYLSVAMLMIGVFGCTLQVM. Over 49-124 the chain is Extracellular; it reads QDKIICLPKR…CYERALHWYA (76 aa). Cystine bridges form between Cys54–Cys308 and Cys115–Cys293. Residues 125-144 form a helical membrane-spanning segment; sequence KYFPYLVLIHTLVFMLCSNF. Over 145–262 the chain is Cytoplasmic; it reads WFKFPGSSSK…EEGDILYAMY (118 aa). Residues 177–206 form a disordered region; it reads EVSGEDSEEKDNRKNNMNRSGTIQSGPEGN. Residues 191–206 are compositionally biased toward polar residues; sequence NNMNRSGTIQSGPEGN. A phosphoserine mark is found at Ser212 and Ser215. A helical membrane pass occupies residues 263-284; that stretch reads VRQTVLKVIKFLIIIAYNSALV. The Extracellular segment spans residues 285 to 314; the sequence is SKVQFTVDCNVDIQDMTGYKNFSCNHTMAH. A helical transmembrane segment spans residues 315 to 339; the sequence is LFSKLSFCYLCFVSIYGLTCLYTLY. Residues 340-803 lie on the Cytoplasmic side of the membrane; that stretch reads WLFYRSLREY…SDVREQMKAD (464 aa). 17 LRR repeats span residues 409–420, 421–443, 446–466, 467–488, 490–513, 515–537, 541–563, 566–586, 588–611, 613–635, 637–659, 660–682, 684–705, 706–728, 730–751, 752–774, and 776–799; these read WTPDKLRQKLQT, NAHN…VFEI, LQSL…IAQL, DNLQ…ALSF, KENL…MYGL, NLEE…TLES, LKSL…VVDV, HLQK…NNLK, MTNL…VFSL, SLQE…SFQH, RKLT…IKKL, TSLE…LFLC, KIRY…IGVL, QSLQ…LYFC, KLKT…IGNL, LFLS…LGDC, and ALKR…VREQ.

It belongs to the LRRC8 family. Heterohexamer; oligomerizes with other LRRC8 proteins (LRRC8A, LRRC8B, LRRC8D and/or LRRC8E) to form a heterohexamer. Homoheptamer; inactive, likely because it is not targeted to the plasma membrane in the absence of LRRC8A. In vivo, the subunit composition may depend primarily on expression levels, and heterooligomeric channels containing various proportions of the different LRRC8 proteins may coexist. Expressed at very low levels in adipose tissue.

It is found in the cell membrane. Its subcellular location is the endoplasmic reticulum membrane. The enzyme catalyses chloride(in) = chloride(out). It catalyses the reaction iodide(out) = iodide(in). It carries out the reaction taurine(out) = taurine(in). The catalysed reaction is 2',3'-cGAMP(out) = 2',3'-cGAMP(in). Non-essential component of the volume-regulated anion channel (VRAC, also named VSOAC channel), an anion channel required to maintain a constant cell volume in response to extracellular or intracellular osmotic changes. The VRAC channel conducts iodide better than chloride and can also conduct organic osmolytes like taurine. Plays a redundant role in the efflux of amino acids, such as aspartate and glutamate, in response to osmotic stress. The VRAC channel also mediates transport of immunoreactive cyclic dinucleotide GMP-AMP (2'-3'-cGAMP), an immune messenger produced in response to DNA virus in the cytosol. Channel activity requires LRRC8A plus at least one other family member (LRRC8B, LRRC8C, LRRC8D or LRRC8E); channel characteristics depend on the precise subunit composition. May play a role in adipogenesis. The polypeptide is Volume-regulated anion channel subunit LRRC8C (Mus musculus (Mouse)).